Reading from the N-terminus, the 123-residue chain is Small ribosomal subunit protein uS12 (123 aa).

A disordered region spans residues 1–32 (MPTIQQLVRKGRKTKVSKNKTPALKGSPQRRG). A compositionally biased stretch (basic residues) spans 9-18 (RKGRKTKVSK). The residue at position 89 (aspartate 89) is a 3-methylthioaspartic acid.

This sequence belongs to the universal ribosomal protein uS12 family. In terms of assembly, part of the 30S ribosomal subunit. Contacts proteins S8 and S17. May interact with IF1 in the 30S initiation complex.

Functionally, with S4 and S5 plays an important role in translational accuracy. In terms of biological role, interacts with and stabilizes bases of the 16S rRNA that are involved in tRNA selection in the A site and with the mRNA backbone. Located at the interface of the 30S and 50S subunits, it traverses the body of the 30S subunit contacting proteins on the other side and probably holding the rRNA structure together. The combined cluster of proteins S8, S12 and S17 appears to hold together the shoulder and platform of the 30S subunit. The chain is Small ribosomal subunit protein uS12 from Thermobifida fusca (strain YX).